Reading from the N-terminus, the 274-residue chain is Rhamnulose-1-phosphate aldolase (274 aa).

E117 is an active-site residue. Zn(2+)-binding residues include H141, H143, and H212.

The protein belongs to the aldolase class II family. RhaD subfamily. In terms of assembly, homotetramer. It depends on Zn(2+) as a cofactor.

The protein resides in the cytoplasm. The enzyme catalyses L-rhamnulose 1-phosphate = (S)-lactaldehyde + dihydroxyacetone phosphate. It participates in carbohydrate degradation; L-rhamnose degradation; glycerone phosphate from L-rhamnose: step 3/3. In terms of biological role, catalyzes the reversible cleavage of L-rhamnulose-1-phosphate to dihydroxyacetone phosphate (DHAP) and L-lactaldehyde. The polypeptide is Rhamnulose-1-phosphate aldolase (Escherichia coli O45:K1 (strain S88 / ExPEC)).